A 98-amino-acid polypeptide reads, in one-letter code: Protein S100-A13 (98 aa).

One can recognise an EF-hand domain in the interval 18-53; sequence TTFFTFARQEGRKDSLSVNEFKELVTQQLPHLLKDV. Positions 32, 37, 64, 66, 68, 70, and 75 each coordinate Ca(2+). Phosphoserine is present on S32.

This sequence belongs to the S-100 family. Homodimer. Part of a copper-dependent multiprotein complex containing S100A13, FGF1 and SYT1. Interacts with FGF1 and SYT1. Interacts with IL1A. As to expression, expressed in heart and skeletal muscle.

It is found in the cytoplasm. The protein resides in the secreted. In terms of biological role, plays a role in the export of proteins that lack a signal peptide and are secreted by an alternative pathway. Binds two calcium ions per subunit. Binds one copper ion. Binding of one copper ion does not interfere with calcium binding. Required for the copper-dependent stress-induced export of IL1A and FGF1. The calcium-free protein binds to lipid vesicles containing phosphatidylserine, but not to vesicles containing phosphatidylcholine. The protein is Protein S100-A13 (S100A13) of Homo sapiens (Human).